A 955-amino-acid polypeptide reads, in one-letter code: Anoctamin-4 (955 aa).

Residues 1–352 (MEASSSGITN…FGEKIGLYFA (352 aa)) lie on the Extracellular side of the membrane. The tract at residues 72–100 (CKDDDSLLHPGNLTSTSDDASRLEAGGET) is disordered. Residues Asn-83, Asn-105, Asn-257, and Asn-288 are each glycosylated (N-linked (GlcNAc...) asparagine). Residues 353 to 373 (WLGWYTGMLFPAAFIGLFVFL) form a helical membrane-spanning segment. Residues 374–424 (YGVTTLDHSQVSKEVCQATDIIMCPVCDKYCPFMRLSDSCVYAKVTHLFDN) lie on the Cytoplasmic side of the membrane. Residues 425–445 (GATVFFAVFMAVWATVFLEFW) traverse the membrane as a helical segment. Topologically, residues 446-505 (KRRRAVIAYDWDLIDWEEEEEEIRPQFEAKYSKKERMNPISGKPEPYQAFTDKCSRLIVS) are extracellular. A helical transmembrane segment spans residues 506–526 (ASGIFFMICVVIAAVFGIVIY). The Cytoplasmic segment spans residues 527–547 (RVVTVSTFAAFKWALIRNNSQ). A helical membrane pass occupies residues 548-568 (VATTGTAVCINFCIIMLLNVL). Topologically, residues 569 to 595 (YEKVALLLTNLEQPRTESEWENSFTLK) are extracellular. A helical transmembrane segment spans residues 596 to 616 (MFLFQFVNLNSSTFYIAFFLG). At 617-715 (RFTGHPGAYL…AYGLFDEYLE (99 aa)) the chain is on the cytoplasmic side. The chain crosses the membrane as a helical span at residues 716–736 (MILQFGFTTIFVAAFPLAPLL). Topologically, residues 737-768 (ALLNNIIEIRLDAYKFVTQWRRPLASRAKDIG) are extracellular. A helical membrane pass occupies residues 769-789 (IWYGILEGIGILSVITNAFVI). Residues 790–885 (AITSDFIPRL…QFWHVLAARL (96 aa)) lie on the Cytoplasmic side of the membrane. A helical membrane pass occupies residues 886 to 906 (AFIIVFEHLVFCIKHLISYLI). At 907 to 955 (PDLPKDLRDRMRREKYLIQEMMYEAELERLQKERKERKKNGKAHHNEWP) the chain is on the extracellular side.

The protein belongs to the anoctamin family.

Its subcellular location is the cell membrane. It carries out the reaction a 1,2-diacyl-sn-glycero-3-phospho-L-serine(in) = a 1,2-diacyl-sn-glycero-3-phospho-L-serine(out). The enzyme catalyses a beta-D-galactosyl-(1&lt;-&gt;1')-N-acylsphing-4-enine(out) = a beta-D-galactosyl-(1&lt;-&gt;1')-N-acylsphing-4-enine(in). It catalyses the reaction a 1,2-diacyl-sn-glycero-3-phosphocholine(in) = a 1,2-diacyl-sn-glycero-3-phosphocholine(out). Its function is as follows. Has calcium-dependent phospholipid scramblase activity; scrambles phosphatidylserine, phosphatidylcholine and galactosylceramide. Does not exhibit calcium-activated chloride channel (CaCC) activity. This chain is Anoctamin-4 (ANO4), found in Homo sapiens (Human).